The primary structure comprises 526 residues: GMP synthase [glutamine-hydrolyzing] (526 aa).

The region spanning 9 to 208 (RILILDFGSQ…VMDICGCETL (200 aa)) is the Glutamine amidotransferase type-1 domain. The active-site Nucleophile is Cys86. Residues His182 and Glu184 contribute to the active site. One can recognise a GMPS ATP-PPase domain in the interval 209 to 401 (WTSSSIIEDA…LGLPYEMLYR (193 aa)). 236–242 (SGGVDSS) provides a ligand contact to ATP.

In terms of assembly, homodimer.

It catalyses the reaction XMP + L-glutamine + ATP + H2O = GMP + L-glutamate + AMP + diphosphate + 2 H(+). Its pathway is purine metabolism; GMP biosynthesis; GMP from XMP (L-Gln route): step 1/1. Functionally, catalyzes the synthesis of GMP from XMP. The protein is GMP synthase [glutamine-hydrolyzing] of Psychromonas ingrahamii (strain DSM 17664 / CCUG 51855 / 37).